Here is a 313-residue protein sequence, read N- to C-terminus: Ribosomal RNA small subunit methyltransferase H (313 aa).

S-adenosyl-L-methionine is bound by residues 35-37 (GGH), aspartate 55, phenylalanine 81, aspartate 103, and glutamine 110.

It belongs to the methyltransferase superfamily. RsmH family.

The protein resides in the cytoplasm. The enzyme catalyses cytidine(1402) in 16S rRNA + S-adenosyl-L-methionine = N(4)-methylcytidine(1402) in 16S rRNA + S-adenosyl-L-homocysteine + H(+). Its function is as follows. Specifically methylates the N4 position of cytidine in position 1402 (C1402) of 16S rRNA. In Pseudomonas aeruginosa (strain LESB58), this protein is Ribosomal RNA small subunit methyltransferase H.